The chain runs to 212 residues: NAD(P)H-hydrate epimerase (212 aa).

The region spanning 11–212 (MRHYDFYTIN…ANDMGTYAVD (202 aa)) is the YjeF N-terminal domain. Position 60-64 (60-64 (NNGGD)) interacts with (6S)-NADPHX. Asn-61 and Asp-123 together coordinate K(+). Residues 127 to 133 (GIGIDRA), Tyr-138, and Asp-156 each bind (6S)-NADPHX. A K(+)-binding site is contributed by Ser-159.

Belongs to the NnrE/AIBP family. It depends on K(+) as a cofactor.

It catalyses the reaction (6R)-NADHX = (6S)-NADHX. The enzyme catalyses (6R)-NADPHX = (6S)-NADPHX. Catalyzes the epimerization of the S- and R-forms of NAD(P)HX, a damaged form of NAD(P)H that is a result of enzymatic or heat-dependent hydration. This is a prerequisite for the S-specific NAD(P)H-hydrate dehydratase to allow the repair of both epimers of NAD(P)HX. This Limosilactobacillus reuteri (strain DSM 20016) (Lactobacillus reuteri) protein is NAD(P)H-hydrate epimerase.